The sequence spans 380 residues: Cytochrome b (380 aa).

Helical transmembrane passes span 34–54, 78–99, 114–134, and 179–199; these read FGSL…LLAT, WLIR…YLHI, WNTG…GYVL, and FFAL…IHLT. Residues His84 and His98 each contribute to the heme b site. Heme b-binding residues include His183 and His197. His202 is a binding site for a ubiquinone. 4 helical membrane passes run 227 to 247, 289 to 309, 321 to 341, and 348 to 368; these read LKDI…ALFS, LGGV…PLLH, FSQF…WVGS, and FIII…LLFP.

This sequence belongs to the cytochrome b family. The cytochrome bc1 complex contains 11 subunits: 3 respiratory subunits (MT-CYB, CYC1 and UQCRFS1), 2 core proteins (UQCRC1 and UQCRC2) and 6 low-molecular weight proteins (UQCRH/QCR6, UQCRB/QCR7, UQCRQ/QCR8, UQCR10/QCR9, UQCR11/QCR10 and a cleavage product of UQCRFS1). This cytochrome bc1 complex then forms a dimer. Heme b serves as cofactor.

Its subcellular location is the mitochondrion inner membrane. Its function is as follows. Component of the ubiquinol-cytochrome c reductase complex (complex III or cytochrome b-c1 complex) that is part of the mitochondrial respiratory chain. The b-c1 complex mediates electron transfer from ubiquinol to cytochrome c. Contributes to the generation of a proton gradient across the mitochondrial membrane that is then used for ATP synthesis. This chain is Cytochrome b (MT-CYB), found in Alca torda (Razorbill).